We begin with the raw amino-acid sequence, 446 residues long: GTPase Der (446 aa).

EngA-type G domains lie at 3–168 (PVIA…YAGQ) and 181–354 (IKIA…KAAM). Residues 9 to 16 (GRPNVGKS), 57 to 61 (DTGGF), 120 to 123 (NKAE), 187 to 194 (GRPNVGKS), 234 to 238 (DTAGL), and 299 to 302 (NKWD) contribute to the GTP site. A KH-like domain is found at 355-439 (SKLPTPKLTR…PLRIEFRSST (85 aa)).

This sequence belongs to the TRAFAC class TrmE-Era-EngA-EngB-Septin-like GTPase superfamily. EngA (Der) GTPase family. Associates with the 50S ribosomal subunit.

GTPase that plays an essential role in the late steps of ribosome biogenesis. This is GTPase Der from Paraburkholderia phymatum (strain DSM 17167 / CIP 108236 / LMG 21445 / STM815) (Burkholderia phymatum).